A 396-amino-acid chain; its full sequence is Probable tRNA sulfurtransferase (396 aa).

One can recognise a THUMP domain in the interval 58–169; that stretch reads NQFIEKLKMV…KKNIYVFTRS (112 aa). Residues 187-188, 212-213, Arg269, Gly291, and Gln300 each bind ATP; these read LL and YF.

This sequence belongs to the ThiI family.

It is found in the cytoplasm. It catalyses the reaction [ThiI sulfur-carrier protein]-S-sulfanyl-L-cysteine + a uridine in tRNA + 2 reduced [2Fe-2S]-[ferredoxin] + ATP + H(+) = [ThiI sulfur-carrier protein]-L-cysteine + a 4-thiouridine in tRNA + 2 oxidized [2Fe-2S]-[ferredoxin] + AMP + diphosphate. The catalysed reaction is [ThiS sulfur-carrier protein]-C-terminal Gly-Gly-AMP + S-sulfanyl-L-cysteinyl-[cysteine desulfurase] + AH2 = [ThiS sulfur-carrier protein]-C-terminal-Gly-aminoethanethioate + L-cysteinyl-[cysteine desulfurase] + A + AMP + 2 H(+). Its pathway is cofactor biosynthesis; thiamine diphosphate biosynthesis. In terms of biological role, catalyzes the ATP-dependent transfer of a sulfur to tRNA to produce 4-thiouridine in position 8 of tRNAs, which functions as a near-UV photosensor. Also catalyzes the transfer of sulfur to the sulfur carrier protein ThiS, forming ThiS-thiocarboxylate. This is a step in the synthesis of thiazole, in the thiamine biosynthesis pathway. The sulfur is donated as persulfide by IscS. The protein is Probable tRNA sulfurtransferase of Halothermothrix orenii (strain H 168 / OCM 544 / DSM 9562).